A 602-amino-acid polypeptide reads, in one-letter code: Basic-leucine zipper transcription factor B (602 aa).

Polar residues predominate over residues 1 to 10 (MNQFYQSTTG). The interval 1–128 (MNQFYQSTTG…NRVNQNLASR (128 aa)) is disordered. 2 stretches are compositionally biased toward low complexity: residues 11-54 (GQQN…TSTS) and 66-102 (QQQI…YNGD). A coiled-coil region spans residues 58-94 (KNKDNQSKQQQIQQQQIQQQQQQQQQQQQQIQQQSVD). The bZIP domain maps to 113 to 176 (ENKKNRNRVN…GVEIMKPDPA (64 aa)). The tract at residues 115-135 (KKNRNRVNQNLASRNYRQRKK) is basic motif. Positions 138–145 (IKEIEEKL) are leucine-zipper. Disordered stretches follow at residues 328-401 (TNLS…QNNN) and 525-602 (QNQT…PSRQ). Composition is skewed to low complexity over residues 336-350 (PNPT…TQST), 358-401 (LTLL…QNNN), and 525-592 (QNQT…SSPY). Residues 509-552 (TFSQQTQQLQQAQLQLQNQTKQQQQQLQNNNNNNNNNNNNNNSF) adopt a coiled-coil conformation. Positions 593 to 602 (NHHQQQPSRQ) are enriched in polar residues.

This sequence belongs to the bZIP family. As to quaternary structure, binds DNA as a dimer. Heterodimerizes with dimA; in vitro. Also able to form homodimer; in vitro.

The protein resides in the nucleus. Transcriptional regulator involved in DIF-1 signaling. DIF-1 (Differentiation Inducing Factor-1) is a signal molecule involved in the differentiation of pstO (prestalk-O) cells. May be a direct activator of ecmA. The sequence is that of Basic-leucine zipper transcription factor B (dimB) from Dictyostelium discoideum (Social amoeba).